The chain runs to 81 residues: Cytochrome b559 subunit alpha (81 aa).

The chain crosses the membrane as a helical span at residues 21 to 35; sequence VIHALTIPALFLAGW. Position 23 (H23) interacts with heme.

Belongs to the PsbE/PsbF family. In terms of assembly, heterodimer of an alpha subunit and a beta subunit. PSII is composed of 1 copy each of membrane proteins PsbA, PsbB, PsbC, PsbD, PsbE, PsbF, PsbH, PsbI, PsbJ, PsbK, PsbL, PsbM, PsbT, PsbX, PsbY, PsbZ, Psb30/Ycf12, peripheral proteins PsbO, CyanoQ (PsbQ), PsbU, PsbV and a large number of cofactors. It forms dimeric complexes. Heme b is required as a cofactor.

The protein localises to the cellular thylakoid membrane. Its function is as follows. This b-type cytochrome is tightly associated with the reaction center of photosystem II (PSII). PSII is a light-driven water:plastoquinone oxidoreductase that uses light energy to abstract electrons from H(2)O, generating O(2) and a proton gradient subsequently used for ATP formation. It consists of a core antenna complex that captures photons, and an electron transfer chain that converts photonic excitation into a charge separation. The sequence is that of Cytochrome b559 subunit alpha from Synechococcus sp. (strain JA-2-3B'a(2-13)) (Cyanobacteria bacterium Yellowstone B-Prime).